The sequence spans 294 residues: MAAVVEKQEAVAEFYDNSTGAWEELFGEHLHDGYYEPGTTATIPAHRAAVVRMIDEALRFAGVSTDDPAKKPRNLLDVGCGLGGTCLYLAKKYDIKCTGITISPEQVKCAEDLAAAQGLENKVSFDVGDALDMPYQDGEFDVVFTLQCIDHVQDKEKFIREMVRVGSPGAAIVVITYTHRDLSPTEQSLKPHEIKTLKKICDNIVLSSISSTHDYVNWMTSLSLKDIKTADWTQNIIPFYPLLFKVSFSMKGFISLLMKGGWSAIKVVLAVKMMSKAIDDGLLYYTAVSGRKPN.

The segment at 75-84 is SAM motif I; the sequence is LLDVGCGLGG. Positions 137 to 143 match the Vacuolar targeting signal motif; sequence DGEFDVV. Positions 138 to 146 are SAM motif II; sequence GEFDVVFTL. Positions 165-174 are SAM motif III; that stretch reads VGSPGAAIVV.

It belongs to the class I-like SAM-binding methyltransferase superfamily. gTMT family. As to quaternary structure, homodimer.

Its subcellular location is the vacuole membrane. The enzyme catalyses picrinine + S-adenosyl-L-methionine = ervincine + S-adenosyl-L-homocysteine + H(+). It functions in the pathway alkaloid biosynthesis; vindoline biosynthesis. In terms of biological role, S-adenosyl-L-methionine-dependent N-methyltransferase involved in the biosynthesis of biologically active monoterpenoid indole alkaloids (MIAs) natural products including vindoline. Catalyzes the conversion of picrinine to N-methylpicrinine (ervincine). The protein is Picrinine-N-methytransferase TMT2 of Catharanthus roseus (Madagascar periwinkle).